A 193-amino-acid chain; its full sequence is Potassium-transporting ATPase KdpC subunit (193 aa).

Residues 14–34 (ITFTFLVLCGLVYPLIVTGIA) form a helical membrane-spanning segment.

This sequence belongs to the KdpC family. As to quaternary structure, the system is composed of three essential subunits: KdpA, KdpB and KdpC.

It is found in the cell membrane. Part of the high-affinity ATP-driven potassium transport (or Kdp) system, which catalyzes the hydrolysis of ATP coupled with the electrogenic transport of potassium into the cytoplasm. This subunit acts as a catalytic chaperone that increases the ATP-binding affinity of the ATP-hydrolyzing subunit KdpB by the formation of a transient KdpB/KdpC/ATP ternary complex. The protein is Potassium-transporting ATPase KdpC subunit of Bacillus cereus (strain AH820).